Consider the following 65-residue polypeptide: MPKMKTNRGAAKRFKKTGSGRFKCKHNHLRHILTKKSSKRKRQLGPKFFVSAADHKRVVACLPYA.

The protein belongs to the bacterial ribosomal protein bL35 family.

This chain is Large ribosomal subunit protein bL35, found in Aeromonas hydrophila subsp. hydrophila (strain ATCC 7966 / DSM 30187 / BCRC 13018 / CCUG 14551 / JCM 1027 / KCTC 2358 / NCIMB 9240 / NCTC 8049).